Consider the following 183-residue polypeptide: Large ribosomal subunit protein uL5 (183 aa).

This sequence belongs to the universal ribosomal protein uL5 family. In terms of assembly, part of the 50S ribosomal subunit; part of the 5S rRNA/L5/L18/L25 subcomplex. Contacts the 5S rRNA and the P site tRNA. Forms a bridge to the 30S subunit in the 70S ribosome.

This is one of the proteins that bind and probably mediate the attachment of the 5S RNA into the large ribosomal subunit, where it forms part of the central protuberance. In the 70S ribosome it contacts protein S13 of the 30S subunit (bridge B1b), connecting the 2 subunits; this bridge is implicated in subunit movement. Contacts the P site tRNA; the 5S rRNA and some of its associated proteins might help stabilize positioning of ribosome-bound tRNAs. The polypeptide is Large ribosomal subunit protein uL5 (Christiangramia forsetii (strain DSM 17595 / CGMCC 1.15422 / KT0803) (Gramella forsetii)).